The following is a 556-amino-acid chain: Urease subunit alpha 1 (556 aa).

One can recognise a Urease domain in the interval 127–556; it reads GAVDTHVHLL…SVSLNRLYFL (430 aa). Ni(2+)-binding residues include His-132, His-134, and Lys-212. Lys-212 bears the N6-carboxylysine mark. His-214 provides a ligand contact to substrate. Positions 241 and 267 each coordinate Ni(2+). The active-site Proton donor is the His-315. Asp-355 is a binding site for Ni(2+).

Belongs to the metallo-dependent hydrolases superfamily. Urease alpha subunit family. In terms of assembly, may form a heterohexamer of 3 UreC (alpha) and 3 UreAB (gamma/beta) subunits. May also form a heterotrimer of UreA (gamma), UreB (beta) and UreC (alpha) subunits. Three heterotrimers associate to form the active enzyme. It depends on Ni cation as a cofactor. Carboxylation allows a single lysine to coordinate two nickel ions.

It localises to the cytoplasm. It catalyses the reaction urea + 2 H2O + H(+) = hydrogencarbonate + 2 NH4(+). It functions in the pathway nitrogen metabolism; urea degradation; CO(2) and NH(3) from urea (urease route): step 1/1. The protein is Urease subunit alpha 1 of Streptomyces avermitilis (strain ATCC 31267 / DSM 46492 / JCM 5070 / NBRC 14893 / NCIMB 12804 / NRRL 8165 / MA-4680).